Here is a 263-residue protein sequence, read N- to C-terminus: Purine nucleoside phosphorylase SE_0862 (263 aa).

Zn(2+) is bound by residues H79, C124, and H141.

Belongs to the purine nucleoside phosphorylase YfiH/LACC1 family. As to quaternary structure, homodimer. The cofactor is Cu(2+). Requires Zn(2+) as cofactor.

It carries out the reaction adenosine + phosphate = alpha-D-ribose 1-phosphate + adenine. It catalyses the reaction S-methyl-5'-thioadenosine + phosphate = 5-(methylsulfanyl)-alpha-D-ribose 1-phosphate + adenine. The catalysed reaction is inosine + phosphate = alpha-D-ribose 1-phosphate + hypoxanthine. The enzyme catalyses adenosine + H2O + H(+) = inosine + NH4(+). Purine nucleoside enzyme that catalyzes the phosphorolysis of adenosine and inosine nucleosides, yielding D-ribose 1-phosphate and the respective free bases, adenine and hypoxanthine. Also catalyzes the phosphorolysis of S-methyl-5'-thioadenosine into adenine and S-methyl-5-thio-alpha-D-ribose 1-phosphate. Also has adenosine deaminase activity. This is Purine nucleoside phosphorylase SE_0862 from Staphylococcus epidermidis (strain ATCC 12228 / FDA PCI 1200).